The primary structure comprises 181 residues: ATP synthase subunit b, chloroplastic (181 aa).

The chain crosses the membrane as a helical span at residues 31–50 (NVLNIAILLSGVVYLGRNFL).

This sequence belongs to the ATPase B chain family. In terms of assembly, F-type ATPases have 2 components, F(1) - the catalytic core - and F(0) - the membrane proton channel. F(1) has five subunits: alpha(3), beta(3), gamma(1), delta(1), epsilon(1). F(0) has four main subunits: a(1), b(1), b'(1) and c(10-14). The alpha and beta chains form an alternating ring which encloses part of the gamma chain. F(1) is attached to F(0) by a central stalk formed by the gamma and epsilon chains, while a peripheral stalk is formed by the delta, b and b' chains.

The protein localises to the plastid. It localises to the chloroplast thylakoid membrane. F(1)F(0) ATP synthase produces ATP from ADP in the presence of a proton or sodium gradient. F-type ATPases consist of two structural domains, F(1) containing the extramembraneous catalytic core and F(0) containing the membrane proton channel, linked together by a central stalk and a peripheral stalk. During catalysis, ATP synthesis in the catalytic domain of F(1) is coupled via a rotary mechanism of the central stalk subunits to proton translocation. In terms of biological role, component of the F(0) channel, it forms part of the peripheral stalk, linking F(1) to F(0). This is ATP synthase subunit b, chloroplastic from Rhodomonas salina (Cryptomonas salina).